Consider the following 726-residue polypeptide: Dipeptidyl-peptidase 5 (726 aa).

An N-terminal signal peptide occupies residues 1 to 19; it reads MAPAKWLIASLAFASTGLA. Asn96 and Asn252 each carry an N-linked (GlcNAc...) asparagine glycan. Residues 268–292 are disordered; that stretch reads VAEPINKRNGPRTPHGIEGASSSPV. N-linked (GlcNAc...) asparagine glycosylation is present at Asn485. Residue Ser558 is the Charge relay system of the active site. N-linked (GlcNAc...) asparagine glycosylation occurs at Asn605. Catalysis depends on charge relay system residues Asp641 and His673. An N-linked (GlcNAc...) asparagine glycan is attached at Asn699.

It belongs to the peptidase S9C family.

It localises to the secreted. In terms of biological role, extracellular dipeptidyl-peptidase which removes N-terminal dipeptides sequentially from polypeptides having unsubstituted N-termini. Contributes to pathogenicity. In Arthroderma otae (strain ATCC MYA-4605 / CBS 113480) (Microsporum canis), this protein is Dipeptidyl-peptidase 5 (DPP5).